We begin with the raw amino-acid sequence, 160 residues long: MVPKLFTPQICLLLLLGLMGVEGSLHARPPQFTKAQWFAIQHINVNPPRCTIAMRVINNYQRRCKNQNTFLRTTFANTVNVCRNRSIRCPRNRTLHNCHRSSYRVPLLHCDLINPGAQNISTCRYADRPGRRFYVVACESRDPRDSPRYPVVPVHLDTII.

The first 27 residues, 1–27 (MVPKLFTPQICLLLLLGLMGVEGSLHA), serve as a signal peptide directing secretion. Residues 28-72 (RPPQFTKAQWFAIQHINVNPPRCTIAMRVINNYQRRCKNQNTFLR) form a required for nearly all of the bactericidal activities; partially involved in LPS-binding region. H42 functions as the Proton acceptor in the catalytic mechanism. Cystine bridges form between C50-C110, C64-C123, C82-C138, and C89-C98. A 3'-nitrotyrosine modification is found at Y60. Position 65–69 (65–69 (KNQNT)) interacts with substrate. N84, N92, and N119 each carry an N-linked (GlcNAc...) asparagine glycan. Residue H155 is the Proton donor of the active site.

It belongs to the pancreatic ribonuclease family. Interacts with bacterial lipopolysaccharide (LPS) and lipoteichoic acid (LTA). In vitro interacts with phospholipid bilayers.

It localises to the secreted. Its function is as follows. Cytotoxin and helminthotoxin with low-efficiency ribonuclease activity. Possesses a wide variety of biological activities. Exhibits antibacterial activity. The protein is Eosinophil cationic protein (RNASE3) of Macaca nemestrina (Pig-tailed macaque).